The chain runs to 226 residues: Thioredoxin domain-containing protein 9 (226 aa).

The 107-residue stretch at 74–180 (REIPSERDFF…TTETLEWRLG (107 aa)) folds into the Thioredoxin domain. 3 positions are modified to phosphoserine: Ser188, Ser221, and Ser223.

As to quaternary structure, forms ternary complexes with the chaperonin TCP1 complex, spanning the cylindrical chaperonin cavity and contacting at least 2 subunits.

It is found in the cytoplasm. The protein localises to the nucleus. It localises to the cytoskeleton. Its subcellular location is the microtubule organizing center. The protein resides in the centrosome. It is found in the midbody. In terms of biological role, significantly diminishes the chaperonin TCP1 complex ATPase activity, thus negatively impacts protein folding, including that of actin or tubulin. In Homo sapiens (Human), this protein is Thioredoxin domain-containing protein 9 (TXNDC9).